The following is a 1015-amino-acid chain: GTPase-activating Rap/Ran-GAP domain-like protein 3 (1015 aa).

The Rap-GAP domain maps to 200 to 416; sequence LLVLEEQEGS…RTLDMLIRSL (217 aa). A CNH domain is found at 498–812; the sequence is PYDIVCGDSW…QLTASRSDIY (315 aa). Disordered regions lie at residues 821 to 842 and 924 to 1004; these read SASNCSSRDTSSQSSPQTPTGY and ELLG…FTFS. Low complexity predominate over residues 823-835; sequence SNCSSRDTSSQSS. Residues 949-959 show a composition bias toward basic and acidic residues; that stretch reads KNKEEEQKRTA.

The protein belongs to the GARNL3 family.

The chain is GTPase-activating Rap/Ran-GAP domain-like protein 3 (garnl3) from Danio rerio (Zebrafish).